Here is a 269-residue protein sequence, read N- to C-terminus: 5'-nucleotidase SurE (269 aa).

Residues Asp-11, Asp-12, Ser-43, and Asn-101 each contribute to the a divalent metal cation site.

The protein belongs to the SurE nucleotidase family. The cofactor is a divalent metal cation.

The protein resides in the cytoplasm. The catalysed reaction is a ribonucleoside 5'-phosphate + H2O = a ribonucleoside + phosphate. Its function is as follows. Nucleotidase that shows phosphatase activity on nucleoside 5'-monophosphates. The sequence is that of 5'-nucleotidase SurE from Prochlorococcus marinus subsp. pastoris (strain CCMP1986 / NIES-2087 / MED4).